The chain runs to 187 residues: Translation initiation factor IF-3 (187 aa).

This sequence belongs to the IF-3 family. As to quaternary structure, monomer.

It localises to the cytoplasm. Its function is as follows. IF-3 binds to the 30S ribosomal subunit and shifts the equilibrium between 70S ribosomes and their 50S and 30S subunits in favor of the free subunits, thus enhancing the availability of 30S subunits on which protein synthesis initiation begins. This Leptospira biflexa serovar Patoc (strain Patoc 1 / Ames) protein is Translation initiation factor IF-3.